Here is a 311-residue protein sequence, read N- to C-terminus: Glutaminase (311 aa).

Substrate contacts are provided by Ser-66, Asn-116, Glu-162, Asn-169, Tyr-193, Tyr-245, and Val-263.

Belongs to the glutaminase family. As to quaternary structure, homotetramer.

The catalysed reaction is L-glutamine + H2O = L-glutamate + NH4(+). The sequence is that of Glutaminase from Rhodopseudomonas palustris (strain ATCC BAA-98 / CGA009).